Here is a 464-residue protein sequence, read N- to C-terminus: Argininosuccinate lyase (464 aa).

The protein belongs to the lyase 1 family. Argininosuccinate lyase subfamily.

It localises to the cytoplasm. It carries out the reaction 2-(N(omega)-L-arginino)succinate = fumarate + L-arginine. The protein operates within amino-acid biosynthesis; L-arginine biosynthesis; L-arginine from L-ornithine and carbamoyl phosphate: step 3/3. In Pseudomonas syringae pv. tomato (strain ATCC BAA-871 / DC3000), this protein is Argininosuccinate lyase.